Here is a 161-residue protein sequence, read N- to C-terminus: Crossover junction endodeoxyribonuclease RuvC (161 aa).

Catalysis depends on residues Asp7, Glu67, and Asp140. Mg(2+)-binding residues include Asp7, Glu67, and Asp140.

This sequence belongs to the RuvC family. As to quaternary structure, homodimer which binds Holliday junction (HJ) DNA. The HJ becomes 2-fold symmetrical on binding to RuvC with unstacked arms; it has a different conformation from HJ DNA in complex with RuvA. In the full resolvosome a probable DNA-RuvA(4)-RuvB(12)-RuvC(2) complex forms which resolves the HJ. The cofactor is Mg(2+).

The protein localises to the cytoplasm. It catalyses the reaction Endonucleolytic cleavage at a junction such as a reciprocal single-stranded crossover between two homologous DNA duplexes (Holliday junction).. In terms of biological role, the RuvA-RuvB-RuvC complex processes Holliday junction (HJ) DNA during genetic recombination and DNA repair. Endonuclease that resolves HJ intermediates. Cleaves cruciform DNA by making single-stranded nicks across the HJ at symmetrical positions within the homologous arms, yielding a 5'-phosphate and a 3'-hydroxyl group; requires a central core of homology in the junction. The consensus cleavage sequence is 5'-(A/T)TT(C/G)-3'. Cleavage occurs on the 3'-side of the TT dinucleotide at the point of strand exchange. HJ branch migration catalyzed by RuvA-RuvB allows RuvC to scan DNA until it finds its consensus sequence, where it cleaves and resolves the cruciform DNA. The protein is Crossover junction endodeoxyribonuclease RuvC of Natranaerobius thermophilus (strain ATCC BAA-1301 / DSM 18059 / JW/NM-WN-LF).